We begin with the raw amino-acid sequence, 474 residues long: Aspartyl/glutamyl-tRNA(Asn/Gln) amidotransferase subunit B (474 aa).

It belongs to the GatB/GatE family. GatB subfamily. As to quaternary structure, heterotrimer of A, B and C subunits.

The catalysed reaction is L-glutamyl-tRNA(Gln) + L-glutamine + ATP + H2O = L-glutaminyl-tRNA(Gln) + L-glutamate + ADP + phosphate + H(+). It carries out the reaction L-aspartyl-tRNA(Asn) + L-glutamine + ATP + H2O = L-asparaginyl-tRNA(Asn) + L-glutamate + ADP + phosphate + 2 H(+). Its function is as follows. Allows the formation of correctly charged Asn-tRNA(Asn) or Gln-tRNA(Gln) through the transamidation of misacylated Asp-tRNA(Asn) or Glu-tRNA(Gln) in organisms which lack either or both of asparaginyl-tRNA or glutaminyl-tRNA synthetases. The reaction takes place in the presence of glutamine and ATP through an activated phospho-Asp-tRNA(Asn) or phospho-Glu-tRNA(Gln). This chain is Aspartyl/glutamyl-tRNA(Asn/Gln) amidotransferase subunit B, found in Methanospirillum hungatei JF-1 (strain ATCC 27890 / DSM 864 / NBRC 100397 / JF-1).